The following is a 625-amino-acid chain: DNA mismatch repair protein MutL (625 aa).

This sequence belongs to the DNA mismatch repair MutL/HexB family.

This protein is involved in the repair of mismatches in DNA. It is required for dam-dependent methyl-directed DNA mismatch repair. May act as a 'molecular matchmaker', a protein that promotes the formation of a stable complex between two or more DNA-binding proteins in an ATP-dependent manner without itself being part of a final effector complex. In Azorhizobium caulinodans (strain ATCC 43989 / DSM 5975 / JCM 20966 / LMG 6465 / NBRC 14845 / NCIMB 13405 / ORS 571), this protein is DNA mismatch repair protein MutL.